The following is a 309-amino-acid chain: Glutaminase (309 aa).

Positions 64, 114, 160, 167, 191, 243, and 261 each coordinate substrate.

This sequence belongs to the glutaminase family. In terms of assembly, homotetramer.

The catalysed reaction is L-glutamine + H2O = L-glutamate + NH4(+). This chain is Glutaminase, found in Methylobacterium sp. (strain 4-46).